The sequence spans 339 residues: Dihydroorotate dehydrogenase (quinone) (339 aa).

Residues 62–66 (AGMDK) and Thr-86 contribute to the FMN site. Position 66 (Lys-66) interacts with substrate. A substrate-binding site is contributed by 111-115 (NRMGF). FMN is bound by residues Asn-139 and Asn-172. Asn-172 is a binding site for substrate. Ser-175 functions as the Nucleophile in the catalytic mechanism. Asn-177 serves as a coordination point for substrate. FMN contacts are provided by Lys-217 and Thr-245. 246–247 (NT) contributes to the substrate binding site. FMN contacts are provided by residues Gly-268, Gly-297, and 318–319 (YS).

It belongs to the dihydroorotate dehydrogenase family. Type 2 subfamily. Monomer. The cofactor is FMN.

The protein resides in the cell membrane. The enzyme catalyses (S)-dihydroorotate + a quinone = orotate + a quinol. The protein operates within pyrimidine metabolism; UMP biosynthesis via de novo pathway; orotate from (S)-dihydroorotate (quinone route): step 1/1. Its function is as follows. Catalyzes the conversion of dihydroorotate to orotate with quinone as electron acceptor. This Shewanella oneidensis (strain ATCC 700550 / JCM 31522 / CIP 106686 / LMG 19005 / NCIMB 14063 / MR-1) protein is Dihydroorotate dehydrogenase (quinone).